Consider the following 640-residue polypeptide: Rab proteins geranylgeranyltransferase component A (640 aa).

2 disordered regions span residues 414 to 439 (DILGDNNNNNNNNNNNNNNNNNNNNN) and 594 to 640 (HNEN…EMEL). Positions 419–439 (NNNNNNNNNNNNNNNNNNNNN) are enriched in low complexity. Over residues 604-624 (IDSDEDEDEDINDMNDNEEED) the composition is skewed to acidic residues.

The protein belongs to the Rab GDI family.

Substrate-binding subunit (component A) of the Rab geranylgeranyltransferase (GGTase) complex. Binds unprenylated Rab proteins and presents the substrate peptide to the catalytic component B. The component A is thought to be regenerated by transferring its prenylated Rab back to the donor membrane. This Candida albicans (Yeast) protein is Rab proteins geranylgeranyltransferase component A (MRS6).